A 109-amino-acid chain; its full sequence is Large ribosomal subunit protein uL22 (109 aa).

This sequence belongs to the universal ribosomal protein uL22 family. As to quaternary structure, part of the 50S ribosomal subunit.

In terms of biological role, this protein binds specifically to 23S rRNA; its binding is stimulated by other ribosomal proteins, e.g. L4, L17, and L20. It is important during the early stages of 50S assembly. It makes multiple contacts with different domains of the 23S rRNA in the assembled 50S subunit and ribosome. Its function is as follows. The globular domain of the protein is located near the polypeptide exit tunnel on the outside of the subunit, while an extended beta-hairpin is found that lines the wall of the exit tunnel in the center of the 70S ribosome. In Psychrobacter sp. (strain PRwf-1), this protein is Large ribosomal subunit protein uL22.